Consider the following 765-residue polypeptide: Protein PAT1 homolog 1 (765 aa).

Disordered regions lie at residues 1–98 (MFRF…DERG), 119–147 (GVGS…LAGP), and 210–244 (LPNR…SPPV). The span at 7 to 30 (LDDDCTLEEEEGLVEEEDEIDQFN) shows a compositional bias: acidic residues. A compositionally biased stretch (basic and acidic residues) spans 45–59 (EEHTRLAELDERVRD). The segment covering 218–227 (SRDEGRDLSE) has biased composition (basic and acidic residues). Residues S235 and S236 each carry the phosphoserine modification. The segment covering 235–244 (SSPVIGSPPV) has biased composition (low complexity).

The protein belongs to the PAT1 family. As to quaternary structure, interacts with ribonucleoprotein complex components.

The protein resides in the cytoplasm. It is found in the P-body. It localises to the nucleus. The protein localises to the PML body. Its subcellular location is the nucleus speckle. Functionally, RNA-binding protein involved in deadenylation-dependent decapping of mRNAs, leading to the degradation of mRNAs. Acts as a scaffold protein that connects deadenylation and decapping machinery. Required for cytoplasmic mRNA processing body (P-body) assembly. The sequence is that of Protein PAT1 homolog 1 (patl1) from Danio rerio (Zebrafish).